The chain runs to 361 residues: Histidinol-phosphate aminotransferase (361 aa).

Lys-220 is subject to N6-(pyridoxal phosphate)lysine.

It belongs to the class-II pyridoxal-phosphate-dependent aminotransferase family. Histidinol-phosphate aminotransferase subfamily. As to quaternary structure, homodimer. It depends on pyridoxal 5'-phosphate as a cofactor.

The enzyme catalyses L-histidinol phosphate + 2-oxoglutarate = 3-(imidazol-4-yl)-2-oxopropyl phosphate + L-glutamate. It participates in amino-acid biosynthesis; L-histidine biosynthesis; L-histidine from 5-phospho-alpha-D-ribose 1-diphosphate: step 7/9. This chain is Histidinol-phosphate aminotransferase, found in Syntrophus aciditrophicus (strain SB).